Consider the following 299-residue polypeptide: Protease HtpX homolog (299 aa).

2 helical membrane-spanning segments follow: residues 15 to 35 and 39 to 59; these read ILLL…GYLF and GLGG…SMIF. Residue His143 coordinates Zn(2+). The active site involves Glu144. His147 lines the Zn(2+) pocket. 2 consecutive transmembrane segments (helical) span residues 158–178 and 198–218; these read IAVA…RMMW and IIML…ATLV. Glu227 provides a ligand contact to Zn(2+).

It belongs to the peptidase M48B family. The cofactor is Zn(2+).

Its subcellular location is the cell membrane. The chain is Protease HtpX homolog from Streptococcus pneumoniae (strain Hungary19A-6).